A 186-amino-acid chain; its full sequence is UPF0398 protein LCA_0919 (186 aa).

Belongs to the UPF0398 family.

This is UPF0398 protein LCA_0919 from Latilactobacillus sakei subsp. sakei (strain 23K) (Lactobacillus sakei subsp. sakei).